A 252-amino-acid polypeptide reads, in one-letter code: Triosephosphate isomerase (252 aa).

Position 10–12 (10–12 (NWK)) interacts with substrate. H96 serves as the catalytic Electrophile. Catalysis depends on E168, which acts as the Proton acceptor. Substrate contacts are provided by residues G174, S214, and 235-236 (GG).

It belongs to the triosephosphate isomerase family. Homodimer.

It is found in the cytoplasm. It carries out the reaction D-glyceraldehyde 3-phosphate = dihydroxyacetone phosphate. It participates in carbohydrate biosynthesis; gluconeogenesis. The protein operates within carbohydrate degradation; glycolysis; D-glyceraldehyde 3-phosphate from glycerone phosphate: step 1/1. Its function is as follows. Involved in the gluconeogenesis. Catalyzes stereospecifically the conversion of dihydroxyacetone phosphate (DHAP) to D-glyceraldehyde-3-phosphate (G3P). The protein is Triosephosphate isomerase of Lactococcus lactis subsp. lactis (strain IL1403) (Streptococcus lactis).